A 194-amino-acid polypeptide reads, in one-letter code: CASP-like protein 1B1 (194 aa).

Residues 1–24 are Cytoplasmic-facing; the sequence is MASENGDKLELAFSAVPDPKPKKD. The helical transmembrane segment at 25–45 threads the bilayer; it reads WVILSLRVVAFFATASATLVM. The Extracellular segment spans residues 46 to 77; the sequence is AFNKQTKGMVVATIGTNPVTITLTAMFQHTPA. A helical membrane pass occupies residues 78-98; the sequence is FIFFVIVNAIASFYNLLVIGV. At 99–111 the chain is on the cytoplasmic side; that stretch reads EILGPQYDYKGLR. A helical membrane pass occupies residues 112 to 132; the sequence is LGLIAILDVMTMALAATGDGA. At 133-164 the chain is on the extracellular side; it reads ATFMAELGRNGNSHARWDKICDKFEAYCNRGG. A helical membrane pass occupies residues 165-185; sequence VALVASFVGLILLLVVTVMSI. Topologically, residues 186–194 are cytoplasmic; the sequence is TKLLKLNRI.

The protein belongs to the Casparian strip membrane proteins (CASP) family. As to quaternary structure, homodimer and heterodimers.

It is found in the cell membrane. This Glycine max (Soybean) protein is CASP-like protein 1B1.